We begin with the raw amino-acid sequence, 371 residues long: Cytochrome b (371 aa).

A run of 4 helical transmembrane segments spans residues 25 to 45 (FGSM…FLAV), 69 to 90 (WMMQ…YIHI), 105 to 125 (WLSG…GYVL), and 170 to 190 (FFAL…LHIM). Residues His-75 and His-89 each coordinate heme b. Heme b-binding residues include His-174 and His-188. Residue His-193 participates in a ubiquinone binding. Transmembrane regions (helical) follow at residues 218–238 (YKDL…VSFL), 280–300 (LWGA…PFTH), 312–332 (IMQL…WAAT), and 339–358 (FTMI…IMNP).

The protein belongs to the cytochrome b family. The cytochrome bc1 complex contains 3 respiratory subunits (MT-CYB, CYC1 and UQCRFS1), 2 core proteins (UQCRC1 and UQCRC2) and probably 6 low-molecular weight proteins. Requires heme b as cofactor.

The protein localises to the mitochondrion inner membrane. In terms of biological role, component of the ubiquinol-cytochrome c reductase complex (complex III or cytochrome b-c1 complex) that is part of the mitochondrial respiratory chain. The b-c1 complex mediates electron transfer from ubiquinol to cytochrome c. Contributes to the generation of a proton gradient across the mitochondrial membrane that is then used for ATP synthesis. The sequence is that of Cytochrome b (MT-CYB) from Eryx miliaris nogaiorum (Black sand boa).